The primary structure comprises 157 residues: Protein Smg (157 aa).

Belongs to the Smg family.

In Pectobacterium atrosepticum (strain SCRI 1043 / ATCC BAA-672) (Erwinia carotovora subsp. atroseptica), this protein is Protein Smg.